The sequence spans 91 residues: Sec-independent protein translocase protein TatA (91 aa).

A helical transmembrane segment spans residues 1–21 (MGIFDWKHWIVILIVVVLVFG). Residues 42–91 (AMHDDDKPAEQPAPQPQQAQPAPQGSPLNQPHTIDAQAHKVDEPIRKDQV) are disordered. Residues 51–64 (EQPAPQPQQAQPAP) show a composition bias toward low complexity. Positions 78-91 (QAHKVDEPIRKDQV) are enriched in basic and acidic residues.

The protein belongs to the TatA/E family. As to quaternary structure, the Tat system comprises two distinct complexes: a TatABC complex, containing multiple copies of TatA, TatB and TatC subunits, and a separate TatA complex, containing only TatA subunits. Substrates initially bind to the TatABC complex, which probably triggers association of the separate TatA complex to form the active translocon.

Its subcellular location is the cell inner membrane. In terms of biological role, part of the twin-arginine translocation (Tat) system that transports large folded proteins containing a characteristic twin-arginine motif in their signal peptide across membranes. TatA could form the protein-conducting channel of the Tat system. In Pseudomonas syringae pv. tomato (strain ATCC BAA-871 / DC3000), this protein is Sec-independent protein translocase protein TatA.